We begin with the raw amino-acid sequence, 292 residues long: 4-hydroxy-tetrahydrodipicolinate synthase (292 aa).

Residue threonine 45 coordinates pyruvate. The active-site Proton donor/acceptor is tyrosine 133. The Schiff-base intermediate with substrate role is filled by lysine 161. Position 203 (isoleucine 203) interacts with pyruvate.

This sequence belongs to the DapA family. Homodimer.

The protein localises to the cytoplasm. It catalyses the reaction L-aspartate 4-semialdehyde + pyruvate = (2S,4S)-4-hydroxy-2,3,4,5-tetrahydrodipicolinate + H2O + H(+). Its pathway is amino-acid biosynthesis; L-lysine biosynthesis via DAP pathway; (S)-tetrahydrodipicolinate from L-aspartate: step 3/4. Its function is as follows. Catalyzes the condensation of (S)-aspartate-beta-semialdehyde [(S)-ASA] and pyruvate to 4-hydroxy-tetrahydrodipicolinate (HTPA). This chain is 4-hydroxy-tetrahydrodipicolinate synthase, found in Stutzerimonas stutzeri (strain A1501) (Pseudomonas stutzeri).